The sequence spans 253 residues: 3-deoxy-manno-octulosonate cytidylyltransferase (253 aa).

This sequence belongs to the KdsB family.

It localises to the cytoplasm. The enzyme catalyses 3-deoxy-alpha-D-manno-oct-2-ulosonate + CTP = CMP-3-deoxy-beta-D-manno-octulosonate + diphosphate. It participates in nucleotide-sugar biosynthesis; CMP-3-deoxy-D-manno-octulosonate biosynthesis; CMP-3-deoxy-D-manno-octulosonate from 3-deoxy-D-manno-octulosonate and CTP: step 1/1. The protein operates within bacterial outer membrane biogenesis; lipopolysaccharide biosynthesis. Activates KDO (a required 8-carbon sugar) for incorporation into bacterial lipopolysaccharide in Gram-negative bacteria. This Proteus mirabilis (strain HI4320) protein is 3-deoxy-manno-octulosonate cytidylyltransferase.